We begin with the raw amino-acid sequence, 48 residues long: Small, acid-soluble spore protein N (48 aa).

Residues 1-48 are disordered; it reads MMGREHDKQAQFTPDHLGTKPVAYKRNKGKKMHNKSNEQPDVIQTKGE. Over residues 23–34 the composition is skewed to basic residues; it reads AYKRNKGKKMHN.

The protein belongs to the SspN family.

The protein localises to the spore core. The chain is Small, acid-soluble spore protein N from Bacillus pumilus (strain SAFR-032).